Here is a 463-residue protein sequence, read N- to C-terminus: Bifunctional protein HldE (463 aa).

The segment at 1–311 (MKKILVVGDL…EEIALILNQT (311 aa)) is ribokinase. 191–194 (NRFE) contributes to the ATP binding site. Residue Asp-260 is part of the active site. The segment at 334–463 (FTNGCFDLLH…IEKIKRTCND (130 aa)) is cytidylyltransferase.

In the N-terminal section; belongs to the carbohydrate kinase PfkB family. It in the C-terminal section; belongs to the cytidylyltransferase family. Homodimer.

It carries out the reaction D-glycero-beta-D-manno-heptose 7-phosphate + ATP = D-glycero-beta-D-manno-heptose 1,7-bisphosphate + ADP + H(+). The enzyme catalyses D-glycero-beta-D-manno-heptose 1-phosphate + ATP + H(+) = ADP-D-glycero-beta-D-manno-heptose + diphosphate. The protein operates within nucleotide-sugar biosynthesis; ADP-L-glycero-beta-D-manno-heptose biosynthesis; ADP-L-glycero-beta-D-manno-heptose from D-glycero-beta-D-manno-heptose 7-phosphate: step 1/4. It functions in the pathway nucleotide-sugar biosynthesis; ADP-L-glycero-beta-D-manno-heptose biosynthesis; ADP-L-glycero-beta-D-manno-heptose from D-glycero-beta-D-manno-heptose 7-phosphate: step 3/4. Its function is as follows. Catalyzes the phosphorylation of D-glycero-D-manno-heptose 7-phosphate at the C-1 position to selectively form D-glycero-beta-D-manno-heptose-1,7-bisphosphate. Functionally, catalyzes the ADP transfer from ATP to D-glycero-beta-D-manno-heptose 1-phosphate, yielding ADP-D-glycero-beta-D-manno-heptose. This is Bifunctional protein HldE from Helicobacter pylori (strain G27).